Consider the following 595-residue polypeptide: Acriflavine sensitivity control protein acr-2 (595 aa).

The zn(2)-C6 fungal-type DNA-binding region spans 22–49 (CYNCHRKRLRCDKSLPACLKCSINGEEC). Low complexity predominate over residues 69-88 (TTRTTNKTNFNGTNTTTPRT). Residues 69–172 (TTRTTNKTNF…PDDNPDPSSQ (104 aa)) are disordered. The segment covering 89–117 (VKSSTPTQAPTPSDSPRQLDTDVTSSSAP) has biased composition (polar residues). Residues 118–138 (SHTCSRSTTTSTTTTRISSPT) are compositionally biased toward low complexity.

It is found in the nucleus. Its function is as follows. Probable transcriptional regulator. The sequence is that of Acriflavine sensitivity control protein acr-2 (acr-2) from Neurospora crassa (strain ATCC 24698 / 74-OR23-1A / CBS 708.71 / DSM 1257 / FGSC 987).